We begin with the raw amino-acid sequence, 93 residues long: Pyrimidine/purine nucleoside phosphorylase (93 aa).

This sequence belongs to the nucleoside phosphorylase PpnP family.

It carries out the reaction a purine D-ribonucleoside + phosphate = a purine nucleobase + alpha-D-ribose 1-phosphate. The enzyme catalyses adenosine + phosphate = alpha-D-ribose 1-phosphate + adenine. It catalyses the reaction cytidine + phosphate = cytosine + alpha-D-ribose 1-phosphate. The catalysed reaction is guanosine + phosphate = alpha-D-ribose 1-phosphate + guanine. It carries out the reaction inosine + phosphate = alpha-D-ribose 1-phosphate + hypoxanthine. The enzyme catalyses thymidine + phosphate = 2-deoxy-alpha-D-ribose 1-phosphate + thymine. It catalyses the reaction uridine + phosphate = alpha-D-ribose 1-phosphate + uracil. The catalysed reaction is xanthosine + phosphate = alpha-D-ribose 1-phosphate + xanthine. Its function is as follows. Catalyzes the phosphorolysis of diverse nucleosides, yielding D-ribose 1-phosphate and the respective free bases. Can use uridine, adenosine, guanosine, cytidine, thymidine, inosine and xanthosine as substrates. Also catalyzes the reverse reactions. This chain is Pyrimidine/purine nucleoside phosphorylase, found in Pseudomonas paraeruginosa (strain DSM 24068 / PA7) (Pseudomonas aeruginosa (strain PA7)).